A 366-amino-acid polypeptide reads, in one-letter code: Putative RING-H2 finger protein ATL21C (366 aa).

Residues 1–23 (MTFSKQLFPFVFFLLFLVSLRHA) form the signal peptide. Residues 243–263 (LVLVISLSAVTVFVFPTCIAI) form a helical membrane-spanning segment. The RING-type; atypical zinc finger occupies 320–362 (CPICLSEYASKETVRFIPECDHCFHVECIDVWLKIHGSCPLCR).

Belongs to the RING-type zinc finger family. ATL subfamily.

Its subcellular location is the membrane. The catalysed reaction is S-ubiquitinyl-[E2 ubiquitin-conjugating enzyme]-L-cysteine + [acceptor protein]-L-lysine = [E2 ubiquitin-conjugating enzyme]-L-cysteine + N(6)-ubiquitinyl-[acceptor protein]-L-lysine.. The protein operates within protein modification; protein ubiquitination. This Arabidopsis thaliana (Mouse-ear cress) protein is Putative RING-H2 finger protein ATL21C (ATL21C).